The primary structure comprises 911 residues: Leucine--tRNA ligase (911 aa).

Positions 42–52 (PYPSGKLHMGH) match the 'HIGH' region motif. Residues 659-663 (TMSKS) carry the 'KMSKS' region motif. Lys662 serves as a coordination point for ATP.

Belongs to the class-I aminoacyl-tRNA synthetase family.

It is found in the cytoplasm. It catalyses the reaction tRNA(Leu) + L-leucine + ATP = L-leucyl-tRNA(Leu) + AMP + diphosphate. The polypeptide is Leucine--tRNA ligase (Delftia acidovorans (strain DSM 14801 / SPH-1)).